The following is a 227-amino-acid chain: Uracil-DNA glycosylase 2 (227 aa).

D67 (proton acceptor) is an active-site residue.

This sequence belongs to the uracil-DNA glycosylase (UDG) superfamily. UNG family.

The protein resides in the cytoplasm. It catalyses the reaction Hydrolyzes single-stranded DNA or mismatched double-stranded DNA and polynucleotides, releasing free uracil.. Its function is as follows. Excises uracil residues from the DNA which can arise as a result of misincorporation of dUMP residues by DNA polymerase or due to deamination of cytosine. The chain is Uracil-DNA glycosylase 2 (ung2) from Streptomyces avermitilis (strain ATCC 31267 / DSM 46492 / JCM 5070 / NBRC 14893 / NCIMB 12804 / NRRL 8165 / MA-4680).